A 362-amino-acid chain; its full sequence is Cobalt-precorrin-5B C(1)-methyltransferase (362 aa).

This sequence belongs to the CbiD family.

The catalysed reaction is Co-precorrin-5B + S-adenosyl-L-methionine = Co-precorrin-6A + S-adenosyl-L-homocysteine. Its pathway is cofactor biosynthesis; adenosylcobalamin biosynthesis; cob(II)yrinate a,c-diamide from sirohydrochlorin (anaerobic route): step 6/10. Catalyzes the methylation of C-1 in cobalt-precorrin-5B to form cobalt-precorrin-6A. The chain is Cobalt-precorrin-5B C(1)-methyltransferase from Geotalea daltonii (strain DSM 22248 / JCM 15807 / FRC-32) (Geobacter daltonii).